Here is a 518-residue protein sequence, read N- to C-terminus: MEDKDITSVNEKEVNENTNPRIIKYDAERRATRTETSKKDKWKNIVTIIASGFALISDGYVNGSMSMLNKVFVMEYGKKNYSSKVSTRVSNAALVGIIFGQFFMGIAADYYSRKSCILVATAILVIGSALCAASHGTTVPGMFWMLTVMRGLVGIGVGAEYPTSTLSANESANEYTTTKRGGILVMVTNLPLAFGGPFATIIFLIVYKICSGTKHLEAIWRTVFAIGCFWPLSVFYFRWKTATTEVYEKGRIKRNIPYFLALKFYWKRLLGTCGTWFMYDFVTFPNGIFSSTIISSVIKDQNDLVKVAEWNLLLGVLAVLGVPIGAYLSDRIGRKYTLMFGFSGYIIFGLIIGCAYDQLKKITPLFIIFYAFMNMLGNAGPGDMLGVISSEASATAVRGVFYGLSAVTGKIGSVVGVECFQPIRDNLGARWTFIIAAICGLIGIIITYFFVPHSLESDLMKQDVEFHNYLVSNGWTGKMGFDETDEESMVRTIEVEENGTNCSKKNAEIISVRQVDQS.

Topologically, residues 1–44 are cytoplasmic; that stretch reads MEDKDITSVNEKEVNENTNPRIIKYDAERRATRTETSKKDKWKN. The chain crosses the membrane as a helical span at residues 45–65; it reads IVTIIASGFALISDGYVNGSM. Topologically, residues 66-91 are extracellular; sequence SMLNKVFVMEYGKKNYSSKVSTRVSN. N-linked (GlcNAc...) asparagine glycosylation is present at Asn-80. The chain crosses the membrane as a helical span at residues 92–112; that stretch reads AALVGIIFGQFFMGIAADYYS. At 113–114 the chain is on the cytoplasmic side; the sequence is RK. Residues 115–136 traverse the membrane as a helical segment; the sequence is SCILVATAILVIGSALCAASHG. At 137-138 the chain is on the extracellular side; that stretch reads TT. The helical transmembrane segment at 139–159 threads the bilayer; that stretch reads VPGMFWMLTVMRGLVGIGVGA. Topologically, residues 160–184 are cytoplasmic; it reads EYPTSTLSANESANEYTTTKRGGIL. Residues 185 to 205 traverse the membrane as a helical segment; the sequence is VMVTNLPLAFGGPFATIIFLI. The Extracellular portion of the chain corresponds to 206-216; sequence VYKICSGTKHL. Residues 217-237 traverse the membrane as a helical segment; it reads EAIWRTVFAIGCFWPLSVFYF. Over 238–268 the chain is Cytoplasmic; that stretch reads RWKTATTEVYEKGRIKRNIPYFLALKFYWKR. A helical membrane pass occupies residues 269-289; that stretch reads LLGTCGTWFMYDFVTFPNGIF. The Extracellular segment spans residues 290–306; sequence SSTIISSVIKDQNDLVK. A helical transmembrane segment spans residues 307–327; it reads VAEWNLLLGVLAVLGVPIGAY. Over 328 to 335 the chain is Cytoplasmic; that stretch reads LSDRIGRK. A helical transmembrane segment spans residues 336–356; sequence YTLMFGFSGYIIFGLIIGCAY. The Extracellular portion of the chain corresponds to 357-360; sequence DQLK. Residues 361–381 traverse the membrane as a helical segment; the sequence is KITPLFIIFYAFMNMLGNAGP. Topologically, residues 382-399 are cytoplasmic; sequence GDMLGVISSEASATAVRG. Residues 400–420 form a helical membrane-spanning segment; that stretch reads VFYGLSAVTGKIGSVVGVECF. The Extracellular segment spans residues 421–430; sequence QPIRDNLGAR. Residues 431-451 form a helical membrane-spanning segment; it reads WTFIIAAICGLIGIIITYFFV. The Cytoplasmic portion of the chain corresponds to 452 to 518; it reads PHSLESDLMK…IISVRQVDQS (67 aa).

The protein belongs to the major facilitator superfamily. Sugar transporter (TC 2.A.1.1) family.

Its subcellular location is the cell membrane. The enzyme catalyses sn-glycerol 3-phosphocholine(out) = sn-glycerol 3-phosphocholine(in). The catalysed reaction is sn-glycero-3-phospho-1D-myo-inositol(out) = sn-glycero-3-phospho-1D-myo-inositol(in). Functionally, glycerophosphodiester transporter that mediates uptake of both glycerophosphoinositol (GroPIns) and glycerophosphocholine (GroPCho) as sources of the nutrients inositol and phosphate. This chain is Glycerophosphoinositol transporter 1, found in Saccharomyces cerevisiae (strain ATCC 204508 / S288c) (Baker's yeast).